The chain runs to 239 residues: tRNA (guanine-N(1)-)-methyltransferase (239 aa).

S-adenosyl-L-methionine-binding positions include glycine 110 and 130 to 135 (VGDYVL).

The protein belongs to the RNA methyltransferase TrmD family. In terms of assembly, homodimer.

The protein resides in the cytoplasm. It catalyses the reaction guanosine(37) in tRNA + S-adenosyl-L-methionine = N(1)-methylguanosine(37) in tRNA + S-adenosyl-L-homocysteine + H(+). Its function is as follows. Specifically methylates guanosine-37 in various tRNAs. This chain is tRNA (guanine-N(1)-)-methyltransferase, found in Borrelia turicatae (strain 91E135).